We begin with the raw amino-acid sequence, 705 residues long: Kinesin-like protein KIF2A (705 aa).

Residues 1–216 (MATANFGKIQ…LDYRPLTTAD (216 aa)) are globular. The disordered stretch occupies residues 65–186 (DLVPDEDIEP…QELREKRAQD (122 aa)). A Phosphoserine modification is found at Ser75. Residue Thr96 is modified to Phosphothreonine. Residue Lys101 is modified to N6-acetyllysine. The segment covering 122 to 139 (LPEQSSSAQQNGSVSDIS) has biased composition (polar residues). Residues Ser134 and Ser139 each carry the phosphoserine modification. Over residues 158-186 (CVKEVEKLQEKREKRRLQQQELREKRAQD) the composition is skewed to basic and acidic residues. The region spanning 222 to 552 (RICVCVRKRP…LRYANRVKEL (331 aa)) is the Kinesin motor domain. An ATP-binding site is contributed by 312–319 (GQTGSGKT). Phosphoserine is present on residues Thr528 and Tyr545. Residues 659-698 (ATQLEAILEQKIDILTELRDKVKSFRAALQEEEQASKQIN) adopt a coiled-coil conformation.

It belongs to the TRAFAC class myosin-kinesin ATPase superfamily. Kinesin family. MCAK/KIF2 subfamily. Interacts with AURKA and PLK1. Interacts with PSRC1. Interacts with MCRS1; the interaction enhances recruitment of KIF2A to the minus ends of spindle microtubules which promotes chromosome alignment. As to expression, highest level in lung. High level in ovary, moderate levels in heart, kidney, placenta, skeletal muscle and spleen (at protein level). Pancreas and spleen express a shorter isoform (at protein level). Expressed in the flagellum of elongated spermatids and sperm in the testis lumen (at protein level). Isoform 1 expressed in neuronal cells. Isoform 2 expressed in astrocytes and fibroblasts.

Its subcellular location is the cytoplasm. The protein localises to the cytoskeleton. The protein resides in the microtubule organizing center. It localises to the centrosome. It is found in the spindle pole. Its subcellular location is the spindle. The protein localises to the lysosome. Plus end-directed microtubule-dependent motor required for normal brain development. May regulate microtubule dynamics during axonal growth. Required for normal progression through mitosis. Required for normal congress of chromosomes at the metaphase plate. Required for normal spindle dynamics during mitosis. Promotes spindle turnover. Implicated in formation of bipolar mitotic spindles. Has microtubule depolymerization activity. The protein is Kinesin-like protein KIF2A (Kif2a) of Mus musculus (Mouse).